A 214-amino-acid chain; its full sequence is uncharacterized protein (214 aa).

Functionally, URF2 product may be involved in the transfer of iron-sulfur clusters to the NADH dehydrogenase complex. It may also be required for the assembly of the NADH dehydrogenase complex. This is an uncharacterized protein from Paracoccus denitrificans.